The chain runs to 275 residues: NH(3)-dependent NAD(+) synthetase (275 aa).

Residue 46 to 53 (GISGGQDS) participates in ATP binding. D52 serves as a coordination point for Mg(2+). R140 lines the deamido-NAD(+) pocket. T160 contributes to the ATP binding site. Residue E165 participates in Mg(2+) binding. Positions 173 and 180 each coordinate deamido-NAD(+). ATP-binding residues include K189 and T211. A deamido-NAD(+)-binding site is contributed by 260–261 (HK).

Belongs to the NAD synthetase family. As to quaternary structure, homodimer.

It catalyses the reaction deamido-NAD(+) + NH4(+) + ATP = AMP + diphosphate + NAD(+) + H(+). Its pathway is cofactor biosynthesis; NAD(+) biosynthesis; NAD(+) from deamido-NAD(+) (ammonia route): step 1/1. In terms of biological role, catalyzes the ATP-dependent amidation of deamido-NAD to form NAD. Uses ammonia as a nitrogen source. The protein is NH(3)-dependent NAD(+) synthetase of Salmonella choleraesuis (strain SC-B67).